The sequence spans 338 residues: Cytoskeleton protein RodZ (338 aa).

The Cytoplasmic segment spans residues 1–111 (MNTEASQDQT…LGKKHKKRDG (111 aa)). Positions 19 to 79 (LRQAREALGL…KLVHLPEDEL (61 aa)) constitute an HTH cro/C1-type domain. The H-T-H motif DNA-binding region spans 30–49 (QQMVAERLCLKVSTIRDIEE). A helical; Signal-anchor for type II membrane protein transmembrane segment spans residues 112-132 (WLMSFTWLIVLVVLGLTGAWW). Over 133–338 (WQNHQAQQAE…RVARLTVGVE (206 aa)) the chain is Periplasmic. Composition is skewed to polar residues over residues 151–163 (SAQLSQNGGQSVP) and 180–195 (PVANSQPSTPTENGTV). The interval 151–253 (SAQLSQNGGQ…LPTADAGVTG (103 aa)) is disordered. The segment covering 196 to 209 (PATSSAAPADTANN) has biased composition (low complexity). The segment covering 210 to 241 (GVNTTAPQGTTSAESAVVSPSQAPLPSVSTAQ) has biased composition (polar residues).

It belongs to the RodZ family.

The protein resides in the cell inner membrane. Cytoskeletal protein that is involved in cell-shape control through regulation of the length of the long axis. This chain is Cytoskeleton protein RodZ, found in Yersinia enterocolitica serotype O:8 / biotype 1B (strain NCTC 13174 / 8081).